A 386-amino-acid polypeptide reads, in one-letter code: 1-deoxy-D-xylulose 5-phosphate reductoisomerase (386 aa).

Residues threonine 7, glycine 8, serine 9, isoleucine 10, alanine 33, and asparagine 124 each coordinate NADPH. Lysine 125 is a 1-deoxy-D-xylulose 5-phosphate binding site. Residue glutamate 126 coordinates NADPH. Aspartate 148 contacts Mn(2+). Positions 149, 150, 174, and 197 each coordinate 1-deoxy-D-xylulose 5-phosphate. Glutamate 150 is a Mn(2+) binding site. Glycine 203 serves as a coordination point for NADPH. Positions 210, 215, 216, and 219 each coordinate 1-deoxy-D-xylulose 5-phosphate. Glutamate 219 contacts Mn(2+).

This sequence belongs to the DXR family. Mg(2+) serves as cofactor. Requires Mn(2+) as cofactor.

The enzyme catalyses 2-C-methyl-D-erythritol 4-phosphate + NADP(+) = 1-deoxy-D-xylulose 5-phosphate + NADPH + H(+). It functions in the pathway isoprenoid biosynthesis; isopentenyl diphosphate biosynthesis via DXP pathway; isopentenyl diphosphate from 1-deoxy-D-xylulose 5-phosphate: step 1/6. Functionally, catalyzes the NADPH-dependent rearrangement and reduction of 1-deoxy-D-xylulose-5-phosphate (DXP) to 2-C-methyl-D-erythritol 4-phosphate (MEP). The sequence is that of 1-deoxy-D-xylulose 5-phosphate reductoisomerase from Kitasatospora griseola (Streptomyces griseolosporeus).